The sequence spans 36 residues: MTDFNLPSIFVPLIGLFFPAIAMASLFLHVQKNKIV.

The helical transmembrane segment at 6–28 threads the bilayer; the sequence is LPSIFVPLIGLFFPAIAMASLFL.

This sequence belongs to the PsaI family.

It is found in the plastid. It localises to the chloroplast thylakoid membrane. In terms of biological role, may help in the organization of the PsaL subunit. In Amborella trichopoda, this protein is Photosystem I reaction center subunit VIII.